We begin with the raw amino-acid sequence, 138 residues long: Cysteine desulfuration protein SufE (138 aa).

Cys-51 functions as the Cysteine persulfide intermediate in the catalytic mechanism.

Belongs to the SufE family. In terms of assembly, homodimer. Interacts with SufS.

It localises to the cytoplasm. It functions in the pathway cofactor biosynthesis; iron-sulfur cluster biosynthesis. In terms of biological role, participates in cysteine desulfuration mediated by SufS. Cysteine desulfuration mobilizes sulfur from L-cysteine to yield L-alanine and constitutes an essential step in sulfur metabolism for biosynthesis of a variety of sulfur-containing biomolecules. Functions as a sulfur acceptor for SufS, by mediating the direct transfer of the sulfur atom from the S-sulfanylcysteine of SufS, an intermediate product of cysteine desulfuration process. The chain is Cysteine desulfuration protein SufE from Pectobacterium atrosepticum (strain SCRI 1043 / ATCC BAA-672) (Erwinia carotovora subsp. atroseptica).